A 1259-amino-acid polypeptide reads, in one-letter code: Ankyrin repeat and sterile alpha motif domain-containing protein 1B (1259 aa).

7 ANK repeats span residues 2–31 (GKDQ…GGIL), 58–87 (SGYT…STNV), 91–120 (KGYF…SHSR), 127–156 (ENET…DPTI), 160–189 (KLET…NLMS), 193–222 (RKHT…DVSC), and 225–254 (EKGS…DANI). Positions 298–325 (HAQEDTAQETHLSSPAESPQKTKSETVT) are disordered. Residues 306-325 (ETHLSSPAESPQKTKSETVT) show a composition bias toward polar residues. Residues Ser310, Ser311, Ser315, Ser353, and Ser364 each carry the phosphoserine modification. 4 disordered regions span residues 367-401 (ELGK…SCGP), 490-513 (PGTS…SPDT), 556-614 (CTSF…GSSP), and 631-661 (TCED…EPSV). The segment covering 371 to 384 (NGSQSVRTSSTINL) has biased composition (polar residues). Phosphothreonine is present on Thr503. Phosphoserine is present on residues Ser507 and Ser510. Over residues 556-574 (CTSFTSSPAASPPTSSVET) the composition is skewed to low complexity. Positions 575–587 (TEVKNEGAEHADD) are enriched in basic and acidic residues. Ser738 is subject to Phosphoserine. Positions 753–776 (VNWSKSSTAERSSKDNSERTPSFT) are disordered. At Thr772 the chain carries Phosphothreonine. The residue at position 774 (Ser774) is a Phosphoserine. SAM domains are found at residues 809–875 (CPVQ…LPKM) and 883–948 (YHPT…RLHD). Tyr900 bears the Phosphotyrosine mark. Position 934 (His934) is a short sequence motif, nuclear localization signal. The disordered stretch occupies residues 943–988 (GDRLHDDPPQKPPRSITLREPSGNHTPPQLSPSLSQSTYTTGGSLD). A compositionally biased stretch (low complexity) spans 968 to 983 (TPPQLSPSLSQSTYTT). At Ser973 the chain carries Phosphoserine. Tyr1006 is subject to Phosphotyrosine. The 158-residue stretch at 1055–1212 (IFQSCDYKAF…SFENKPSKPI (158 aa)) folds into the PID domain. Residues 1196–1216 (HSSTLPESFENKPSKPIPKPR) form a disordered region.

In terms of assembly, interacts with EPHA8. Isoform 2 interacts with COIL.

The protein localises to the cytoplasm. It is found in the nucleus. It localises to the postsynaptic density. The protein resides in the cell projection. Its subcellular location is the dendritic spine. Its function is as follows. Isoform 2 may participate in the regulation of nucleoplasmic coilin protein interactions in neuronal and transformed cells. The protein is Ankyrin repeat and sterile alpha motif domain-containing protein 1B (Anks1b) of Mus musculus (Mouse).